Consider the following 144-residue polypeptide: 3-dehydroquinate dehydratase (144 aa).

Tyr-23 serves as the catalytic Proton acceptor. Positions 74, 80, and 87 each coordinate substrate. His-100 (proton donor) is an active-site residue. Substrate is bound by residues 101 to 102 (LS) and Arg-111.

The protein belongs to the type-II 3-dehydroquinase family. In terms of assembly, homododecamer.

The catalysed reaction is 3-dehydroquinate = 3-dehydroshikimate + H2O. It functions in the pathway metabolic intermediate biosynthesis; chorismate biosynthesis; chorismate from D-erythrose 4-phosphate and phosphoenolpyruvate: step 3/7. In terms of biological role, catalyzes a trans-dehydration via an enolate intermediate. The protein is 3-dehydroquinate dehydratase of Hydrogenovibrio crunogenus (strain DSM 25203 / XCL-2) (Thiomicrospira crunogena).